The following is a 260-amino-acid chain: HTH-type transcriptional repressor NanR (260 aa).

Residues 27-95 (KKLSEMVEEE…NGERARISRP (69 aa)) form the HTH gntR-type domain. The H-T-H motif DNA-binding region spans 55-74 (ERELMAFFNVGRPSVREALA).

It belongs to the NanR family.

In terms of biological role, transcriptional repressor that controls expression of the genes required for the catabolism of sialic acids. The sequence is that of HTH-type transcriptional repressor NanR from Edwardsiella tarda (strain FL6-60).